The sequence spans 78 residues: MKLIIFTGLALLLIVSLIDVEAQNEGACLPRGSVCTTNHAGCCSKLGCDCYRRFEKGVEKGQKCWCIPTGLRYSKEKE.

The first 22 residues, 1–22 (MKLIIFTGLALLLIVSLIDVEA), serve as a signal peptide directing secretion. Positions 23–26 (QNEG) are excised as a propeptide.

This sequence belongs to the neurotoxin 19 (CSTX) family. 07 (U7-Lctx) subfamily. In terms of processing, contains 4 disulfide bonds. Expressed by the venom gland.

The protein localises to the secreted. This is U7-lycotoxin-Ls1d from Lycosa singoriensis (Wolf spider).